A 511-amino-acid polypeptide reads, in one-letter code: Cytochrome P450 77A2 (511 aa).

Residue cysteine 456 coordinates heme.

Belongs to the cytochrome P450 family. The cofactor is heme.

The chain is Cytochrome P450 77A2 (CYP77A2) from Solanum melongena (Eggplant).